The following is a 136-amino-acid chain: Ig heavy chain V-A2 region P-MU-3 (136 aa).

The first 19 residues, 1-19 (METGLRWLLLVAVLKGVQC), serve as a signal peptide directing secretion. Position 20 is a pyrrolidone carboxylic acid (Gln20). An Ig-like domain is found at 20–127 (QSVKESEGGL…ENEFFNAIWG (108 aa)).

This chain is Ig heavy chain V-A2 region P-MU-3, found in Oryctolagus cuniculus (Rabbit).